A 356-amino-acid polypeptide reads, in one-letter code: Histidinol-phosphate aminotransferase (356 aa).

The residue at position 211 (K211) is an N6-(pyridoxal phosphate)lysine.

It belongs to the class-II pyridoxal-phosphate-dependent aminotransferase family. Histidinol-phosphate aminotransferase subfamily. As to quaternary structure, homodimer. Pyridoxal 5'-phosphate serves as cofactor.

It catalyses the reaction L-histidinol phosphate + 2-oxoglutarate = 3-(imidazol-4-yl)-2-oxopropyl phosphate + L-glutamate. It functions in the pathway amino-acid biosynthesis; L-histidine biosynthesis; L-histidine from 5-phospho-alpha-D-ribose 1-diphosphate: step 7/9. The polypeptide is Histidinol-phosphate aminotransferase (Aeromonas hydrophila subsp. hydrophila (strain ATCC 7966 / DSM 30187 / BCRC 13018 / CCUG 14551 / JCM 1027 / KCTC 2358 / NCIMB 9240 / NCTC 8049)).